Consider the following 153-residue polypeptide: SsrA-binding protein (153 aa).

The interval 129 to 153 (KREDMKKKDQSREMAQALRERSKSH) is disordered.

Belongs to the SmpB family.

The protein localises to the cytoplasm. Required for rescue of stalled ribosomes mediated by trans-translation. Binds to transfer-messenger RNA (tmRNA), required for stable association of tmRNA with ribosomes. tmRNA and SmpB together mimic tRNA shape, replacing the anticodon stem-loop with SmpB. tmRNA is encoded by the ssrA gene; the 2 termini fold to resemble tRNA(Ala) and it encodes a 'tag peptide', a short internal open reading frame. During trans-translation Ala-aminoacylated tmRNA acts like a tRNA, entering the A-site of stalled ribosomes, displacing the stalled mRNA. The ribosome then switches to translate the ORF on the tmRNA; the nascent peptide is terminated with the 'tag peptide' encoded by the tmRNA and targeted for degradation. The ribosome is freed to recommence translation, which seems to be the essential function of trans-translation. In Geobacter metallireducens (strain ATCC 53774 / DSM 7210 / GS-15), this protein is SsrA-binding protein.